Here is a 433-residue protein sequence, read N- to C-terminus: CinA-like protein (433 aa).

It belongs to the CinA family.

The sequence is that of CinA-like protein from Prochlorococcus marinus (strain MIT 9515).